The primary structure comprises 301 residues: Homoserine O-acetyltransferase (301 aa).

C142 (acyl-thioester intermediate) is an active-site residue. 2 residues coordinate substrate: K163 and S192. Residue H235 is the Proton acceptor of the active site. E237 is an active-site residue. R249 is a binding site for substrate.

This sequence belongs to the MetA family.

It localises to the cytoplasm. The enzyme catalyses L-homoserine + acetyl-CoA = O-acetyl-L-homoserine + CoA. It functions in the pathway amino-acid biosynthesis; L-methionine biosynthesis via de novo pathway; O-acetyl-L-homoserine from L-homoserine: step 1/1. Transfers an acetyl group from acetyl-CoA to L-homoserine, forming acetyl-L-homoserine. The sequence is that of Homoserine O-acetyltransferase from Bacillus subtilis (strain 168).